The primary structure comprises 197 residues: dTTP/UTP pyrophosphatase (197 aa).

D70 functions as the Proton acceptor in the catalytic mechanism.

It belongs to the Maf family. YhdE subfamily. The cofactor is a divalent metal cation.

The protein localises to the cytoplasm. The enzyme catalyses dTTP + H2O = dTMP + diphosphate + H(+). The catalysed reaction is UTP + H2O = UMP + diphosphate + H(+). Functionally, nucleoside triphosphate pyrophosphatase that hydrolyzes dTTP and UTP. May have a dual role in cell division arrest and in preventing the incorporation of modified nucleotides into cellular nucleic acids. The polypeptide is dTTP/UTP pyrophosphatase (yceF2) (Salmonella choleraesuis (strain SC-B67)).